The following is a 35-amino-acid chain: Thionin NsW2 (35 aa).

Intrachain disulfides connect cysteine 4-cysteine 32, cysteine 12-cysteine 30, and cysteine 16-cysteine 26.

Contains 4 disulfide bonds.

It is found in the secreted. Functionally, antimicrobial peptide disrupting membranes. Has antibacterial against Gram-positive bacteria S.aureus (MIC=6.5 uM) and B.subtilis (MIC=3.25 uM) but not against Gram-negative bacterium E.coli. Has antifungal activity against C.albicans (MIC=3.25 uM). This Nigella sativa (Black cumin) protein is Thionin NsW2.